Here is a 457-residue protein sequence, read N- to C-terminus: NAC domain-containing protein 69 (457 aa).

In terms of domain architecture, NAC spans 4–153 (DLVGYRFYPT…NYVICQVMYK (150 aa)). Residues 107-159 (IGIKKTLVYYEGRVPKGVWTPWVMHEYHITCLPQDQRNYVICQVMYKGEDGDV) mediate DNA binding. Disordered regions lie at residues 158–180 (DVPS…SNTV) and 302–332 (DSNS…SNRQ). Over residues 162–180 (GGNNSSEPSQSLVSDSNTV) the composition is skewed to polar residues. Over residues 302–311 (DSNSDAESIS) the composition is skewed to low complexity. Positions 312-332 (ATSYQGTSSPGDDSVGSSNRQ) are enriched in polar residues. A helical transmembrane segment spans residues 421–441 (IYLMRMIIGFILLLALISNII).

Its subcellular location is the membrane. It is found in the nucleus. Functionally, transcription activator activated by proteolytic cleavage through regulated intramembrane proteolysis (RIP). Involved in salt stress response during seed germination and seedling growth. Binds the auxin-responsive IAA30 gene promoter and may serve as a molecular link that interconnects a developmental feedback loop of auxin signaling with a salt signal transduction pathway during seed germination. This is NAC domain-containing protein 69 (NAC69) from Arabidopsis thaliana (Mouse-ear cress).